We begin with the raw amino-acid sequence, 446 residues long: Plant intracellular Ras-group-related LRR protein 3 (446 aa).

Positions 65 to 100 (EACRAVVRLEETHDAYEALLQEAEGRLEAVYRSAME) form a coiled coil. Residues 101-121 (GKDLEEPDGRDESAAAAAGDD) form a disordered region. LRR repeat units follow at residues 138–160 (GKPV…AFGR), 161–184 (IQGL…IGGL), 185–207 (DHLE…IGLL), 208–230 (LNLR…ISKC), 232–254 (SLIE…GYEL), 255–277 (VNLR…ICEM), 279–300 (SLYL…IGKL), 301–324 (SSLE…SFGD), 325–347 (LLNL…NFGR), and 349–371 (DKLE…IVNK). The GVYW motif lies at 372–384 (GVDAVKEYMLQRW).

Belongs to the SHOC2 family. As to expression, widely expressed.

Its function is as follows. Leucine-rich repeat protein that likely mediates protein interactions, possibly in the context of signal transduction. This chain is Plant intracellular Ras-group-related LRR protein 3 (IRL3), found in Oryza sativa subsp. japonica (Rice).